The chain runs to 184 residues: Protein GrpE (184 aa).

The segment covering 1-17 (MQHEDKTPEQQENKTPE) has biased composition (basic and acidic residues). The interval 1–39 (MQHEDKTPEQQENKTPETELQQENAPATPQEAGAAGSID) is disordered. Positions 18 to 27 (TELQQENAPA) are enriched in polar residues.

The protein belongs to the GrpE family. In terms of assembly, homodimer.

The protein resides in the cytoplasm. Participates actively in the response to hyperosmotic and heat shock by preventing the aggregation of stress-denatured proteins, in association with DnaK and GrpE. It is the nucleotide exchange factor for DnaK and may function as a thermosensor. Unfolded proteins bind initially to DnaJ; upon interaction with the DnaJ-bound protein, DnaK hydrolyzes its bound ATP, resulting in the formation of a stable complex. GrpE releases ADP from DnaK; ATP binding to DnaK triggers the release of the substrate protein, thus completing the reaction cycle. Several rounds of ATP-dependent interactions between DnaJ, DnaK and GrpE are required for fully efficient folding. This chain is Protein GrpE, found in Methylobacillus flagellatus (strain ATCC 51484 / DSM 6875 / VKM B-1610 / KT).